The chain runs to 267 residues: Proteasome subunit alpha (267 aa).

Residues 231–267 (ETLLQERDSKESAESEEPKESEEGKKTGKKSDADSSD) form a disordered region. The span at 234–267 (LQERDSKESAESEEPKESEEGKKTGKKSDADSSD) shows a compositional bias: basic and acidic residues.

The protein belongs to the peptidase T1A family. As to quaternary structure, the 20S proteasome core is composed of 14 alpha and 14 beta subunits that assemble into four stacked heptameric rings, resulting in a barrel-shaped structure. The two inner rings, each composed of seven catalytic beta subunits, are sandwiched by two outer rings, each composed of seven alpha subunits. The catalytic chamber with the active sites is on the inside of the barrel. Has a gated structure, the ends of the cylinder being occluded by the N-termini of the alpha-subunits. Is capped by the proteasome-associated ATPase, ARC.

The protein resides in the cytoplasm. The protein operates within protein degradation; proteasomal Pup-dependent pathway. With respect to regulation, the formation of the proteasomal ATPase ARC-20S proteasome complex, likely via the docking of the C-termini of ARC into the intersubunit pockets in the alpha-rings, may trigger opening of the gate for substrate entry. Interconversion between the open-gate and close-gate conformations leads to a dynamic regulation of the 20S proteasome proteolysis activity. In terms of biological role, component of the proteasome core, a large protease complex with broad specificity involved in protein degradation. The chain is Proteasome subunit alpha from Mycobacterium marinum (strain ATCC BAA-535 / M).